A 235-amino-acid chain; its full sequence is Thiamine-phosphate synthase (235 aa).

4-amino-2-methyl-5-(diphosphooxymethyl)pyrimidine contacts are provided by residues 50 to 54 and asparagine 91; that span reads QLRDK. Mg(2+)-binding residues include aspartate 92 and aspartate 111. Serine 130 lines the 4-amino-2-methyl-5-(diphosphooxymethyl)pyrimidine pocket. Residue 160 to 162 coordinates 2-[(2R,5Z)-2-carboxy-4-methylthiazol-5(2H)-ylidene]ethyl phosphate; the sequence is TPT. Lysine 163 is a binding site for 4-amino-2-methyl-5-(diphosphooxymethyl)pyrimidine. Residue glycine 191 participates in 2-[(2R,5Z)-2-carboxy-4-methylthiazol-5(2H)-ylidene]ethyl phosphate binding.

It belongs to the thiamine-phosphate synthase family. Mg(2+) is required as a cofactor.

It carries out the reaction 2-[(2R,5Z)-2-carboxy-4-methylthiazol-5(2H)-ylidene]ethyl phosphate + 4-amino-2-methyl-5-(diphosphooxymethyl)pyrimidine + 2 H(+) = thiamine phosphate + CO2 + diphosphate. The enzyme catalyses 2-(2-carboxy-4-methylthiazol-5-yl)ethyl phosphate + 4-amino-2-methyl-5-(diphosphooxymethyl)pyrimidine + 2 H(+) = thiamine phosphate + CO2 + diphosphate. It catalyses the reaction 4-methyl-5-(2-phosphooxyethyl)-thiazole + 4-amino-2-methyl-5-(diphosphooxymethyl)pyrimidine + H(+) = thiamine phosphate + diphosphate. Its pathway is cofactor biosynthesis; thiamine diphosphate biosynthesis; thiamine phosphate from 4-amino-2-methyl-5-diphosphomethylpyrimidine and 4-methyl-5-(2-phosphoethyl)-thiazole: step 1/1. In terms of biological role, condenses 4-methyl-5-(beta-hydroxyethyl)thiazole monophosphate (THZ-P) and 2-methyl-4-amino-5-hydroxymethyl pyrimidine pyrophosphate (HMP-PP) to form thiamine monophosphate (TMP). The protein is Thiamine-phosphate synthase of Mycobacterium leprae (strain TN).